A 437-amino-acid polypeptide reads, in one-letter code: Protein translocase subunit SecY (437 aa).

Transmembrane regions (helical) follow at residues 19-39 (LFTL…IPGV), 69-89 (LLQI…SIIL), 122-142 (VALA…GALF), 157-177 (IFTT…VMWL), 189-209 (GMSI…LWAI), 219-239 (WIEF…VVFV), 275-295 (GVIP…IVQF), 318-338 (HIIL…AISF), 378-398 (GSLY…GFGA), and 400-420 (QNFP…LETV).

The protein belongs to the SecY/SEC61-alpha family. Component of the Sec protein translocase complex. Heterotrimer consisting of SecY, SecE and SecG subunits. The heterotrimers can form oligomers, although 1 heterotrimer is thought to be able to translocate proteins. Interacts with the ribosome. Interacts with SecDF, and other proteins may be involved. Interacts with SecA.

The protein resides in the cell membrane. Functionally, the central subunit of the protein translocation channel SecYEG. Consists of two halves formed by TMs 1-5 and 6-10. These two domains form a lateral gate at the front which open onto the bilayer between TMs 2 and 7, and are clamped together by SecE at the back. The channel is closed by both a pore ring composed of hydrophobic SecY resides and a short helix (helix 2A) on the extracellular side of the membrane which forms a plug. The plug probably moves laterally to allow the channel to open. The ring and the pore may move independently. The chain is Protein translocase subunit SecY from Streptomyces lividans.